The sequence spans 491 residues: Regulatory protein NPR5 (491 aa).

The 91-residue stretch at 26-116 folds into the BTB domain; that stretch reads SDVTFSVEGR…LYSGQVSIVP (91 aa). The C2HC NPR-type zinc finger occupies 122–136; the sequence is RPNCGERGCWHTHCS. The Zn(2+) site is built by Cys-125, Cys-130, His-132, and Cys-135. ANK repeat units follow at residues 254–283, 284–313, 318–347, and 351–385; these read QKIR…LNLD, ESLA…DVNY, AGKT…DPNV, and GGIT…KLRL. The interval 400–491 is disordered; sequence EEGNNSNNQN…MYHHHHQHHF (92 aa). Residues 403–413 are compositionally biased toward low complexity; it reads NNSNNQNNDNN. The span at 457-470 shows a compositional bias: basic and acidic residues; the sequence is DQGDDHNSQREGMS.

This sequence belongs to the plant 'ANKYRIN-BTB/POZ' family. 'NOOT-BOP-COCH-like' (NBCL) subfamily. Homodimer or heterodimer with BOP1. Interacts with PAN. As to expression, highly expressed in young floral meristem. Predominantly expressed in the boundary between floral meristem (FM) and sepal primordia.

It is found in the cytoplasm. Its subcellular location is the nucleus. It participates in protein modification; protein ubiquitination. Functionally, may act as a substrate-specific adapter of an E3 ubiquitin-protein ligase complex (CUL3-RBX1-BTB) which mediates the ubiquitination and subsequent proteasomal degradation of target proteins. Acts redundantly with BOP2. BOP1/2 promote leaf and floral meristem fate and determinacy in a pathway targeting AP1 and AGL24. BOP1/2 act as transcriptional co-regulators through direct interaction with TGA factors, including PAN, a direct regulator of AP1. Controls lateral organ fate through positive regulation of adaxial-abaxial polarity genes ATHB-14/PHB, YAB1/FIL and YAB3, and through positive regulation of LOB domain-containing genes LOB, LBD6/AS2 and LBD36. Promotes and maintains a developmentally determinate state in leaf cells through the negative regulation of JAG, JGL and class I KNOX genes. Is also involved in nectary development, formation of normal abscission zones (AZs) and suppression of bract formation, probably by regulating the cell wall disorganization. In Arabidopsis thaliana (Mouse-ear cress), this protein is Regulatory protein NPR5.